Reading from the N-terminus, the 79-residue chain is Exodeoxyribonuclease 7 small subunit (79 aa).

It belongs to the XseB family. As to quaternary structure, heterooligomer composed of large and small subunits.

It is found in the cytoplasm. The catalysed reaction is Exonucleolytic cleavage in either 5'- to 3'- or 3'- to 5'-direction to yield nucleoside 5'-phosphates.. In terms of biological role, bidirectionally degrades single-stranded DNA into large acid-insoluble oligonucleotides, which are then degraded further into small acid-soluble oligonucleotides. The chain is Exodeoxyribonuclease 7 small subunit from Syntrophus aciditrophicus (strain SB).